The following is a 143-amino-acid chain: Endoribonuclease YbeY (143 aa).

Residues His111, His115, and Asp121 each contribute to the Zn(2+) site.

It belongs to the endoribonuclease YbeY family. The cofactor is Zn(2+).

The protein resides in the cytoplasm. In terms of biological role, single strand-specific metallo-endoribonuclease involved in late-stage 70S ribosome quality control and in maturation of the 3' terminus of the 16S rRNA. The polypeptide is Endoribonuclease YbeY (Cytophaga hutchinsonii (strain ATCC 33406 / DSM 1761 / CIP 103989 / NBRC 15051 / NCIMB 9469 / D465)).